Consider the following 382-residue polypeptide: Methylthioribose-1-phosphate isomerase (382 aa).

Aspartate 257 functions as the Proton donor in the catalytic mechanism.

Belongs to the eIF-2B alpha/beta/delta subunits family. MtnA subfamily.

It localises to the cytoplasm. Its subcellular location is the nucleus. It catalyses the reaction 5-(methylsulfanyl)-alpha-D-ribose 1-phosphate = 5-(methylsulfanyl)-D-ribulose 1-phosphate. Its pathway is amino-acid biosynthesis; L-methionine biosynthesis via salvage pathway; L-methionine from S-methyl-5-thio-alpha-D-ribose 1-phosphate: step 1/6. Its function is as follows. Catalyzes the interconversion of methylthioribose-1-phosphate (MTR-1-P) into methylthioribulose-1-phosphate (MTRu-1-P). The chain is Methylthioribose-1-phosphate isomerase from Paracoccidioides brasiliensis (strain Pb18).